A 308-amino-acid chain; its full sequence is Glutaminase (308 aa).

Substrate is bound by residues Ser68, Asn118, Glu162, Asn169, Tyr193, Tyr244, and Val262.

The protein belongs to the glutaminase family. As to quaternary structure, homotetramer.

The catalysed reaction is L-glutamine + H2O = L-glutamate + NH4(+). The polypeptide is Glutaminase (Hahella chejuensis (strain KCTC 2396)).